A 199-amino-acid polypeptide reads, in one-letter code: Thymidine kinase (199 aa).

Residues 15 to 22 (GSMFSGKS) and 88 to 91 (DEVQ) contribute to the ATP site. The Proton acceptor role is filled by E89. Residues C145, C148, C183, and H186 each contribute to the Zn(2+) site.

Belongs to the thymidine kinase family. In terms of assembly, homotetramer.

The protein localises to the cytoplasm. The enzyme catalyses thymidine + ATP = dTMP + ADP + H(+). This is Thymidine kinase from Staphylococcus saprophyticus subsp. saprophyticus (strain ATCC 15305 / DSM 20229 / NCIMB 8711 / NCTC 7292 / S-41).